Here is a 148-residue protein sequence, read N- to C-terminus: Angiogenin-1 (148 aa).

Positions 1–23 (MVMVLSPLLLVFILGLGLTPVAP) are cleaved as a signal peptide. The active-site Proton acceptor is the His-37. Arg-45 is a tRNA binding site. 3 disulfides stabilise this stretch: Cys-50-Cys-105, Cys-63-Cys-116, and Cys-81-Cys-131. The Nucleolar localization signal motif lies at 55–59 (KNRRL). TRNA contacts are provided by Cys-105 and Ile-127. His-138 acts as the Proton donor in catalysis.

The protein belongs to the pancreatic ribonuclease family. As to quaternary structure, homodimer. Interacts with RNH1; inhibiting ANG ribonuclease activity. As to expression, serum and milk.

It localises to the secreted. It is found in the nucleus. The protein resides in the nucleolus. Its subcellular location is the cytoplasm. The protein localises to the stress granule. Its function is as follows. Secreted ribonuclease that can either promote or restrict cell proliferation of target cells, depending on the context. Endocytosed in target cells via its receptor PLXNB2 and translocates to the cytoplasm or nucleus. Under stress conditions, localizes to the cytoplasm and promotes the assembly of stress granules (SGs): specifically cleaves a subset of tRNAs within anticodon loops to produce tRNA-derived stress-induced fragments (tiRNAs), resulting in translation repression and inhibition of cell proliferation. tiRNas also prevent formation of apoptosome, thereby promoting cell survival. Preferentially cleaves RNAs between a pyrimidine and an adenosine residue, suggesting that it cleaves the anticodon loop of tRNA(Ala) (32-UUAGCAU-38) after positions 33 and 36. Cleaves a subset of tRNAs, including tRNA(Ala), tRNA(Glu), tRNA(Gly), tRNA(Lys), tRNA(Val), tRNA(His), tRNA(Asp) and tRNA(Sec). Under growth conditions and in differentiated cells, translocates to the nucleus and stimulates ribosomal RNA (rRNA) transcription, including that containing the initiation site sequences of 45S rRNA, thereby promoting cell growth and proliferation. Angiogenin induces vascularization of normal and malignant tissues via its ability to promote rRNA transcription. The protein is Angiogenin-1 (ANG1) of Bos taurus (Bovine).